A 449-amino-acid polypeptide reads, in one-letter code: Phosphoglucosamine mutase (449 aa).

The active-site Phosphoserine intermediate is Ser-102. The Mg(2+) site is built by Ser-102, Asp-241, Asp-243, and Asp-245. Position 102 is a phosphoserine (Ser-102).

It belongs to the phosphohexose mutase family. Mg(2+) serves as cofactor. Post-translationally, activated by phosphorylation.

The catalysed reaction is alpha-D-glucosamine 1-phosphate = D-glucosamine 6-phosphate. In terms of biological role, catalyzes the conversion of glucosamine-6-phosphate to glucosamine-1-phosphate. This Pseudoalteromonas translucida (strain TAC 125) protein is Phosphoglucosamine mutase.